The chain runs to 539 residues: Tetracenomycin B2 monooxygenase-dioxygenase (539 aa).

FAD-binding residues include L15, E35, Q128, and L152. Catalysis depends on Y231, which acts as the Proton acceptor. Residue D313 coordinates FAD.

It belongs to the PheA/TfdB FAD monooxygenase family. FAD is required as a cofactor.

The catalysed reaction is tetracenomycin B2 + 2 NADPH + 2 O2 + 2 H(+) = 8-demethyltetracenomycin C + 2 NADP(+) + H2O. It catalyses the reaction tetracenomycin A2 + 2 NADPH + 2 O2 + 2 H(+) = tetracenomycin C + 2 NADP(+) + H2O. It participates in antibiotic biosynthesis. In terms of biological role, involved in the biosynthesis of elloramycin, an antitumor polyketide. In vivo, probably catalyzes the triple hydroxylation of 8-demethyltetracenomycin A2 (tetracenomycin B2) at positions C-4, C-4a and C-12a to give 8-demethyltetracenomycin C (8-DMTC). In vitro, catalyzes the triple hydroxylation of tetracenomycin A2 (TCM A2) to give tetracenomycin C (TCM C). Uses NADPH as an electron donor and requires molecular O(2). This Streptomyces olivaceus protein is Tetracenomycin B2 monooxygenase-dioxygenase.